Here is a 156-residue protein sequence, read N- to C-terminus: Small ribosomal subunit protein uS7 (156 aa).

This sequence belongs to the universal ribosomal protein uS7 family. As to quaternary structure, part of the 30S ribosomal subunit. Contacts proteins S9 and S11.

In terms of biological role, one of the primary rRNA binding proteins, it binds directly to 16S rRNA where it nucleates assembly of the head domain of the 30S subunit. Is located at the subunit interface close to the decoding center, probably blocks exit of the E-site tRNA. The sequence is that of Small ribosomal subunit protein uS7 from Synechococcus sp. (strain CC9902).